We begin with the raw amino-acid sequence, 594 residues long: Laccase-2 (594 aa).

Residues 1-20 form the signal peptide; that stretch reads MGGIIKLSFLFCSLISLVNS. Asn67 carries an N-linked (GlcNAc...) asparagine glycan. Plastocyanin-like domains are found at residues 70–183 and 195–357; these read EALA…HSPN and DRIV…RYTG. Cu cation is bound by residues His117 and His119. Asn124 is a glycosylation site (N-linked (GlcNAc...) asparagine). A disulfide bridge connects residues Cys138 and Cys578. His162 and His164 together coordinate Cu cation. Asn242, Asn286, Asn320, Asn358, Asn397, Asn430, Asn452, and Asn458 each carry an N-linked (GlcNAc...) asparagine glycan. Residues 466-563 form the Plastocyanin-like 3 domain; sequence PVNIIINNLD…KMAVVVVQPE (98 aa). Residues His480, His483, and His485 each coordinate Cu cation. Asn508 carries an N-linked (GlcNAc...) asparagine glycan. 4 residues coordinate Cu cation: His543, Cys544, His545, and His549.

It belongs to the multicopper oxidase family. Requires Cu cation as cofactor.

The protein localises to the secreted. It localises to the cell wall. It catalyses the reaction 4 hydroquinone + O2 = 4 benzosemiquinone + 2 H2O. Functionally, laccase that catalyzes the oxidation of certain aromatic compounds, including L-dopa, to quinones, which then polymerize to melanin. Able to oxidize a wide variety of aromatic diphenol and diamino groups in the ortho, meta, and para positions but not monophenolic groups such as in phenol, tyramine, or tyrosine. Plays an important role in virulence. Plays a role in dissemination to extrapulmonary sites but is not involved in pulmonary growth or in elicitation of cellular immune responses in the lung. In Cryptococcus neoformans var. grubii serotype A (strain H99 / ATCC 208821 / CBS 10515 / FGSC 9487) (Filobasidiella neoformans var. grubii), this protein is Laccase-2 (LAC2).